We begin with the raw amino-acid sequence, 504 residues long: Pyrichalasin C-7 hydroxylase (504 aa).

The first 17 residues, 1-17 (MLNSAACIVLAITAVLG), serve as a signal peptide directing secretion. Residue Cys-449 coordinates heme.

This sequence belongs to the cytochrome P450 family. Heme serves as cofactor.

It functions in the pathway mycotoxin biosynthesis. In terms of biological role, cytochrome P450 monooxygenase; part of the gene cluster that mediates the biosynthesis of the mycotoxin pyrichalasin H, a tyrosine-derived cytochalasan that inhibits the growth of rice seedlings, but also inhibits lymphocyte capping and actin polymerization and alters cell morphology. Pyrichalasin H is indicated as the responsible agent for the genus-specific pathogenicity of M.grisea toward crabgrass. The first step in the pathway is catalyzed by the O-methyltransferase pyiA which methylates free tyrosine to generate the precursor O-methyltyrosine. The hybrid PKS-NRPS pyiS, assisted by the enoyl reductase pyiC, are responsible for fusion of the O-methyltyrosine precursor and the polyketide backbone. The polyketide synthase module (PKS) of pyiS is responsible for the synthesis of the polyketide backbone and the downstream nonribosomal peptide synthetase (NRPS) amidates the carboxyl end of the polyketide with the O-methyltyrosine precursor. As the NRPS A-domain demonstrates substrate tolerance, pyiS can also use phenylalanine, tyrosine and even para-chlorophenylalanine as amino acid precursor, which leads to the production of novel cytochalasans, including halogenated cytochalasans. Because pyiS lacks a designated enoylreductase (ER) domain, the required activity is provided the enoyl reductase pyiC. Reduction by the hydrolyase pyiE leads to 1,5-dihydropyrrolone, which is substrate for dehydration and intra-molecular Diels-Alder cyclization by the Diels-Alderase pyiF to yield the required isoindolone-fused macrocycle. The tailoring cytochrome P450 monooxygenases piyD and piyG catalyze the hydroxylation at C-18 and C-7, respectivily, whereas the short-chain dehydrogenase/reductase pyiH reduces the carbonyl at C-21 in preparation for the transfer of an acetyl group by the acetyltransferase pyiB. These 3 reactions whose order is not clear yet, lead to the production of O-methylpyrichalasin J, a deacetylated pyrichalasin H. Finally, pyiB to converts O-methylpyrichalasin J into the final product pyrichalasin H via acetylation of C-21. This is Pyrichalasin C-7 hydroxylase from Pyricularia grisea (Crabgrass-specific blast fungus).